Here is a 96-residue protein sequence, read N- to C-terminus: UPF0235 protein Spro_4033 (96 aa).

The protein belongs to the UPF0235 family.

This is UPF0235 protein Spro_4033 from Serratia proteamaculans (strain 568).